Here is a 146-residue protein sequence, read N- to C-terminus: Hemoglobin subunit beta-1 (146 aa).

The Globin domain occupies 2-146 (KWSDKERAVI…VVSALGKQYC (145 aa)). Heme b is bound by residues H63 and H92.

Belongs to the globin family. Hb1 is a heterotetramer of two alpha-1 chains and two beta-1 chains; Hb2 is a heterotetramer of two alpha-2 chains and two beta-1 chains. As to expression, red blood cells.

Involved in oxygen transport from gills to the various peripheral tissues. This is Hemoglobin subunit beta-1 (hbb1) from Anarhichas minor (Arctic spotted wolffish).